The chain runs to 305 residues: GMP synthase [glutamine-hydrolyzing] subunit B (305 aa).

The 183-residue stretch at 2 to 184 folds into the GMPS ATP-PPase domain; that stretch reads VNTERFIQQA…LGLPREIQHR (183 aa). 29-35 provides a ligand contact to ATP; the sequence is SGGVDSS.

In terms of assembly, heterodimer composed of a glutamine amidotransferase subunit (A) and a GMP-binding subunit (B).

It carries out the reaction XMP + L-glutamine + ATP + H2O = GMP + L-glutamate + AMP + diphosphate + 2 H(+). It functions in the pathway purine metabolism; GMP biosynthesis; GMP from XMP (L-Gln route): step 1/1. Catalyzes the synthesis of GMP from XMP. The sequence is that of GMP synthase [glutamine-hydrolyzing] subunit B from Methanosphaerula palustris (strain ATCC BAA-1556 / DSM 19958 / E1-9c).